The chain runs to 601 residues: Lanthanide-dependent methanol dehydrogenase (601 aa).

The N-terminal stretch at 1 to 21 (MRAVHLLALGAGLAAASPALA) is a signal peptide. The cysteines at positions 124 and 125 are disulfide-linked. Residues arginine 130, threonine 174, serine 189, glycine 190, and glycine 191 each coordinate pyrroloquinoline quinone. Position 192 (glutamate 192) interacts with La(3+). Cysteine 197 and cysteine 256 are joined by a disulfide. Tryptophan 258 provides a ligand contact to pyrroloquinoline quinone. Positions 276, 318, and 320 each coordinate La(3+). The active-site Proton acceptor is the aspartate 318. A pyrroloquinoline quinone-binding site is contributed by arginine 345. The cysteines at positions 408 and 437 are disulfide-linked. Residues tryptophan 494 and tryptophan 558 each contribute to the pyrroloquinoline quinone site.

The protein belongs to the bacterial PQQ dehydrogenase family. In terms of assembly, homodimer. La(3+) is required as a cofactor. It depends on Nd(3+) as a cofactor. Requires pyrroloquinoline quinone as cofactor.

Its subcellular location is the periplasm. It carries out the reaction 2 Fe(III)-[cytochrome cL] + methanol = 2 Fe(II)-[cytochrome cL] + formaldehyde + 2 H(+). Functionally, catalyzes the oxidation of methanol to formaldehyde, but only in the presence of lanthanides (Ln). Contributes to methanol metabolism when La(3+) is present in the natural environment of the bacterium, allowing bacterial growth with methanol as carbon and energy source. Thereby is an essential enzyme for Ln-dependent methylotrophy. Uses a specific cytochrome cL (XoxG), encoded by the adjacent gene in the locus, as electron acceptor. Also plays a role in the transcriptional regulation of the mxa and xox1 operons, most likely acting as a lanthanide sensory module. Is also able to oxidize formaldehyde to formate in vitro, but this activity does not occur in vivo. The protein is Lanthanide-dependent methanol dehydrogenase of Methylorubrum extorquens (strain ATCC 14718 / DSM 1338 / JCM 2805 / NCIMB 9133 / AM1) (Methylobacterium extorquens).